Consider the following 117-residue polypeptide: Large ribosomal subunit protein bL20 (117 aa).

The protein belongs to the bacterial ribosomal protein bL20 family.

In terms of biological role, binds directly to 23S ribosomal RNA and is necessary for the in vitro assembly process of the 50S ribosomal subunit. It is not involved in the protein synthesizing functions of that subunit. The protein is Large ribosomal subunit protein bL20 of Leptospira biflexa serovar Patoc (strain Patoc 1 / Ames).